Reading from the N-terminus, the 196-residue chain is ATP-dependent Clp protease proteolytic subunit (196 aa).

S101 acts as the Nucleophile in catalysis. The active site involves H126.

Belongs to the peptidase S14 family. In terms of assembly, component of the chloroplastic Clp protease core complex.

Its subcellular location is the plastid. It localises to the chloroplast stroma. The enzyme catalyses Hydrolysis of proteins to small peptides in the presence of ATP and magnesium. alpha-casein is the usual test substrate. In the absence of ATP, only oligopeptides shorter than five residues are hydrolyzed (such as succinyl-Leu-Tyr-|-NHMec, and Leu-Tyr-Leu-|-Tyr-Trp, in which cleavage of the -Tyr-|-Leu- and -Tyr-|-Trp bonds also occurs).. In terms of biological role, cleaves peptides in various proteins in a process that requires ATP hydrolysis. Has a chymotrypsin-like activity. Plays a major role in the degradation of misfolded proteins. The protein is ATP-dependent Clp protease proteolytic subunit of Pinus thunbergii (Japanese black pine).